A 393-amino-acid polypeptide reads, in one-letter code: Dual-specificity RNA methyltransferase RlmN (393 aa).

Residues 1–22 (MSEQLLSELSPVAATSPSPAPA) form a disordered region. The segment covering 10 to 22 (SPVAATSPSPAPA) has biased composition (low complexity). The active-site Proton acceptor is glutamate 114. The Radical SAM core domain occupies 120-358 (EDDRATLCVS…TTIVRKTRGD (239 aa)). Cysteine 127 and cysteine 364 are oxidised to a cystine. 3 residues coordinate [4Fe-4S] cluster: cysteine 134, cysteine 138, and cysteine 141. Residues 188-189 (GE), serine 220, 242-244 (SLH), and asparagine 321 contribute to the S-adenosyl-L-methionine site. Residue cysteine 364 is the S-methylcysteine intermediate of the active site.

It belongs to the radical SAM superfamily. RlmN family. [4Fe-4S] cluster serves as cofactor.

The protein resides in the cytoplasm. It catalyses the reaction adenosine(2503) in 23S rRNA + 2 reduced [2Fe-2S]-[ferredoxin] + 2 S-adenosyl-L-methionine = 2-methyladenosine(2503) in 23S rRNA + 5'-deoxyadenosine + L-methionine + 2 oxidized [2Fe-2S]-[ferredoxin] + S-adenosyl-L-homocysteine. It carries out the reaction adenosine(37) in tRNA + 2 reduced [2Fe-2S]-[ferredoxin] + 2 S-adenosyl-L-methionine = 2-methyladenosine(37) in tRNA + 5'-deoxyadenosine + L-methionine + 2 oxidized [2Fe-2S]-[ferredoxin] + S-adenosyl-L-homocysteine. In terms of biological role, specifically methylates position 2 of adenine 2503 in 23S rRNA and position 2 of adenine 37 in tRNAs. m2A2503 modification seems to play a crucial role in the proofreading step occurring at the peptidyl transferase center and thus would serve to optimize ribosomal fidelity. The protein is Dual-specificity RNA methyltransferase RlmN of Sodalis glossinidius (strain morsitans).